The sequence spans 693 residues: Heat shock protein homolog SSE2 (693 aa).

The disordered stretch occupies residues L653–D693. Over residues D664–S679 the composition is skewed to basic and acidic residues. A compositionally biased stretch (acidic residues) spans D680–D693.

This sequence belongs to the heat shock protein 70 family.

Functionally, has a calcium-dependent calmodulin-binding activity. The polypeptide is Heat shock protein homolog SSE2 (SSE2) (Saccharomyces cerevisiae (strain ATCC 204508 / S288c) (Baker's yeast)).